Reading from the N-terminus, the 211-residue chain is Endoplasmic reticulum vesicle protein 25 (211 aa).

The first 19 residues, 1 to 19, serve as a signal peptide directing secretion; that stretch reads MKSIVSVLTLLLLINAVAA. The Lumenal segment spans residues 20-180; the sequence is LRFVLPAKDK…TNESTNRRVK (161 aa). Positions 33 to 121 constitute a GOLD domain; it reads PFCVRDFVKN…TKEIDLSVAI (89 aa). The helical transmembrane segment at 181 to 201 threads the bilayer; the sequence is FFSVGITLALIALGVWQIIYL. Over 202 to 211 the chain is Cytoplasmic; sequence RSYFRSKHII.

This sequence belongs to the EMP24/GP25L family.

It localises to the endoplasmic reticulum membrane. Its subcellular location is the golgi apparatus membrane. In terms of biological role, constituent of COPII-coated endoplasmic reticulum-derived transport vesicles. Required for efficient transport of a subset of secretory proteins to the Golgi. Facilitates retrograde transport from the Golgi to the endoplasmic reticulum. The chain is Endoplasmic reticulum vesicle protein 25 (ERV25) from Yarrowia lipolytica (strain CLIB 122 / E 150) (Yeast).